The chain runs to 234 residues: Phosphoribosylformylglycinamidine synthase subunit PurQ (234 aa).

Residues 6-234 (VGVVVFPGSN…ESLFRSLTGV (229 aa)) form the Glutamine amidotransferase type-1 domain. Residue cysteine 89 is the Nucleophile of the active site. Active-site residues include histidine 206 and glutamate 208.

In terms of assembly, part of the FGAM synthase complex composed of 1 PurL, 1 PurQ and 2 PurS subunits.

The protein resides in the cytoplasm. The enzyme catalyses N(2)-formyl-N(1)-(5-phospho-beta-D-ribosyl)glycinamide + L-glutamine + ATP + H2O = 2-formamido-N(1)-(5-O-phospho-beta-D-ribosyl)acetamidine + L-glutamate + ADP + phosphate + H(+). The catalysed reaction is L-glutamine + H2O = L-glutamate + NH4(+). It participates in purine metabolism; IMP biosynthesis via de novo pathway; 5-amino-1-(5-phospho-D-ribosyl)imidazole from N(2)-formyl-N(1)-(5-phospho-D-ribosyl)glycinamide: step 1/2. Part of the phosphoribosylformylglycinamidine synthase complex involved in the purines biosynthetic pathway. Catalyzes the ATP-dependent conversion of formylglycinamide ribonucleotide (FGAR) and glutamine to yield formylglycinamidine ribonucleotide (FGAM) and glutamate. The FGAM synthase complex is composed of three subunits. PurQ produces an ammonia molecule by converting glutamine to glutamate. PurL transfers the ammonia molecule to FGAR to form FGAM in an ATP-dependent manner. PurS interacts with PurQ and PurL and is thought to assist in the transfer of the ammonia molecule from PurQ to PurL. The chain is Phosphoribosylformylglycinamidine synthase subunit PurQ from Chlorobium chlorochromatii (strain CaD3).